The primary structure comprises 677 residues: MHDARTFFMRGSCTYAHPVAIGRFFPLSSPTHTPQGTLMKSHGTMCSRNALLLPRRGAGLHVLTPRIREARPVNTGVKVILSLFATLVLMVGVFFCAPRASFAEFERHFYQPTVLSALSTNLREVSKASEAWHSRYRPLFSQFCALDAVRSSFDPAQKAEDITQRAREASALLSSVAGLKGVRIVEAQKPNIHFSTFESDVLLADSGSVTYRKYNAEEHDVPLQFLGEHSPEPKVIIDEYHDALLYSFPSLGNYGEYRGRILFYLSLRALGTHLIAENKLKITDSIVPLSADDYTFGGIVIGIPHEGVRSLKPSVLAEWKRKQFRVQTVRSEQHEDWALLSNASGAFVIAQAVPVLLFGFTPLTKGLVAMVAVVTTFLLVFQLLSLRQDPLTKLRDRLIHFHAQLLHSCLEQKESLEWEEVRTRLEHRRRETDAEMKKSLPRRLRIRRGRELDALLSKGWDDVFSTLEHGYGGARAMNRAQIEQLVREVLAQSLASGEAVLPVAMRADTADEELDEVLEELPDEAASLPSDSSPEEDLDPLEEVESIEGTAEESTREYAAAGDALLSKTPQLSTHSEYVPATLAELLGRNAEPGDVVRDSAVLEYIEGVFDYRPCCFYESHAVHDCLEVVTGEDGPSLSPMESIVSTEDGLFTIRVSKEEGNHLNRDFKALVDSVLY.

3 helical membrane-spanning segments follow: residues 80-102 (ILSL…RASF), 338-360 (ALLS…LFGF), and 367-386 (LVAM…LLSL). The interval 523–556 (DEAASLPSDSSPEEDLDPLEEVESIEGTAEESTR) is disordered. Acidic residues predominate over residues 533–546 (SPEEDLDPLEEVES).

It is found in the cell membrane. This is an uncharacterized protein from Treponema pallidum (strain Nichols).